The sequence spans 373 residues: tRNA (guanine(26)-N(2))-dimethyltransferase (373 aa).

The 364-residue stretch at 2–365 (KIISEGETKL…AELSDLVVLI (364 aa)) folds into the Trm1 methyltransferase domain. S-adenosyl-L-methionine is bound by residues Arg35, Arg66, Asp86, Asp113, and Ala114.

It belongs to the class I-like SAM-binding methyltransferase superfamily. Trm1 family.

The catalysed reaction is guanosine(26) in tRNA + 2 S-adenosyl-L-methionine = N(2)-dimethylguanosine(26) in tRNA + 2 S-adenosyl-L-homocysteine + 2 H(+). Dimethylates a single guanine residue at position 26 of a number of tRNAs using S-adenosyl-L-methionine as donor of the methyl groups. This is tRNA (guanine(26)-N(2))-dimethyltransferase from Methanococcus maripaludis (strain C6 / ATCC BAA-1332).